The chain runs to 119 residues: DNA-binding protein inhibitor ID-3 (119 aa).

The bHLH domain maps to 28–80 (RGKSPSTEEPLSLLDDMNHCYSRLRELVPGVPRGTQLSQVEILQRVIDYILDL). The tract at residues 35–87 (EEPLSLLDDMNHCYSRLRELVPGVPRGTQLSQVEILQRVIDYILDLQVVLAEP) is interaction with IFI204.

Homodimer, and heterodimer with other HLH proteins. Interacts with CLOCK and BMAL1. Interacts with COPS5 and COPS7A. Interacts with IFI204. Interacts with GATA4 and NKX2-5. Interacts with ANKRD2; both proteins cooperate in myoblast differentiation. Polyubiquitinated; which is favored by Ifi204 and leads to proteasomal degradation. In terms of tissue distribution, expressed by myoblasts (at protein level).

It localises to the nucleus. The protein resides in the cytoplasm. Functionally, transcriptional regulator (lacking a basic DNA binding domain) which negatively regulates the basic helix-loop-helix (bHLH) transcription factors by forming heterodimers and inhibiting their DNA binding and transcriptional activity. Implicated in regulating a variety of cellular processes, including cellular growth, senescence, differentiation, apoptosis, angiogenesis, and neoplastic transformation. Involved in myogenesis by inhibiting skeletal muscle and cardiac myocyte differentiation and promoting muscle precursor cells proliferation. Inhibits the binding of E2A-containing protein complexes to muscle creatine kinase E-box enhancer. Regulates the circadian clock by repressing the transcriptional activator activity of the CLOCK-BMAL1 heterodimer. The sequence is that of DNA-binding protein inhibitor ID-3 (Id3) from Mus musculus (Mouse).